The primary structure comprises 312 residues: tRNA U34 carboxymethyltransferase (312 aa).

Residues lysine 88, tryptophan 102, lysine 107, glycine 127, aspartate 149–serine 151, leucine 177–aspartate 178, methionine 191, tyrosine 195, and arginine 304 contribute to the carboxy-S-adenosyl-L-methionine site.

It belongs to the class I-like SAM-binding methyltransferase superfamily. CmoB family. In terms of assembly, homotetramer.

It catalyses the reaction carboxy-S-adenosyl-L-methionine + 5-hydroxyuridine(34) in tRNA = 5-carboxymethoxyuridine(34) in tRNA + S-adenosyl-L-homocysteine + H(+). In terms of biological role, catalyzes carboxymethyl transfer from carboxy-S-adenosyl-L-methionine (Cx-SAM) to 5-hydroxyuridine (ho5U) to form 5-carboxymethoxyuridine (cmo5U) at position 34 in tRNAs. In Dichelobacter nodosus (strain VCS1703A), this protein is tRNA U34 carboxymethyltransferase.